A 603-amino-acid polypeptide reads, in one-letter code: Glutathione-regulated potassium-efflux system protein KefB (603 aa).

Transmembrane regions (helical) follow at residues 5 to 25 (ALLTAGVLFLFVAVVAVPIAA), 29 to 49 (IGAVLGYLIAGIAIGPWGLGF), 55 to 75 (AILHFSELGVVFLMFIIGLEL), 87 to 107 (IFGVGAAQVGLSTLLLGGALY), 115 to 135 (SALIGGVGLAMSSTAMALQLM), 152 to 172 (VLLFQDLAVIPALALIPILAG), 180 to 202 (WERIGLKVAAFLGMLIGGRYLVR), 207 to 227 (FIAASGVREVFTAAALLLVLG), 230 to 250 (LFMETLGLSMALGTFIAGILL), 268 to 288 (GLLLGLFFISVGMALNLGILY), 291 to 311 (IVKIMVAVLVLVAVKAAVLYF), 326 to 346 (FAGVLSQGGEFAFVLFSAAAS), and 356 to 376 (PLLLVTVTLSMMTTPLLMQLI). Residues 400–521 (EPQVIVVGFG…VRHFSRETFS (122 aa)) form the RCK N-terminal domain.

Belongs to the monovalent cation:proton antiporter 2 (CPA2) transporter (TC 2.A.37) family. KefB subfamily. In terms of assembly, interacts with the regulatory subunit KefG.

The protein localises to the cell inner membrane. Functionally, pore-forming subunit of a potassium efflux system that confers protection against electrophiles. Catalyzes K(+)/H(+) antiport. The chain is Glutathione-regulated potassium-efflux system protein KefB from Pectobacterium carotovorum subsp. carotovorum (strain PC1).